The chain runs to 149 residues: Protegrin-4 (149 aa).

An N-terminal signal peptide occupies residues 1-29 (METQRASLCLGRWSLWLLLLALVVPSASA). A propeptide spanning residues 30 to 130 (QALSYREAVL…DITCNEVQGV (101 aa)) is cleaved from the precursor. Residues 61–80 (DQPPKADEDPGTPKPVSFTV) are disordered. Cystine bridges form between C85–C96, C107–C124, C136–C145, and C138–C143. Position 148 is an arginine amide (R148).

It belongs to the cathelicidin family.

Its subcellular location is the secreted. Functionally, microbicidal activity. This is Protegrin-4 (NPG4) from Sus scrofa (Pig).